Reading from the N-terminus, the 326-residue chain is Undecaprenyl-phosphate 4-deoxy-4-formamido-L-arabinose transferase (326 aa).

2 consecutive transmembrane segments (helical) span residues 236-256 (LSVV…LLIV) and 270-290 (VFTL…AMGL).

This sequence belongs to the glycosyltransferase 2 family.

The protein localises to the cell inner membrane. The enzyme catalyses UDP-4-deoxy-4-formamido-beta-L-arabinose + di-trans,octa-cis-undecaprenyl phosphate = 4-deoxy-4-formamido-alpha-L-arabinopyranosyl di-trans,octa-cis-undecaprenyl phosphate + UDP. It participates in glycolipid biosynthesis; 4-amino-4-deoxy-alpha-L-arabinose undecaprenyl phosphate biosynthesis; 4-amino-4-deoxy-alpha-L-arabinose undecaprenyl phosphate from UDP-4-deoxy-4-formamido-beta-L-arabinose and undecaprenyl phosphate: step 1/2. The protein operates within bacterial outer membrane biogenesis; lipopolysaccharide biosynthesis. Catalyzes the transfer of 4-deoxy-4-formamido-L-arabinose from UDP to undecaprenyl phosphate. The modified arabinose is attached to lipid A and is required for resistance to polymyxin and cationic antimicrobial peptides. The sequence is that of Undecaprenyl-phosphate 4-deoxy-4-formamido-L-arabinose transferase from Proteus mirabilis (strain HI4320).